A 61-amino-acid chain; its full sequence is Bacteriocin leucocin-A (61 aa).

Positions M1–G24 are excised as a propeptide. C33 and C38 are disulfide-bonded.

It belongs to the bacteriocin class IIA/YGNGV family.

It is found in the secreted. Its function is as follows. Inhibits a wide spectrum of lactic acid bacteria. This chain is Bacteriocin leucocin-A (lcnA), found in Leuconostoc gelidum.